Here is a 278-residue protein sequence, read N- to C-terminus: Diaminopimelate epimerase (278 aa).

Substrate-binding residues include Asn13, Gln46, and Asn66. Cys75 acts as the Proton donor in catalysis. Residues 76 to 77 (GN), Asn159, Asn192, and 210 to 211 (ER) each bind substrate. The active-site Proton acceptor is Cys219. A substrate-binding site is contributed by 220-221 (GT).

The protein belongs to the diaminopimelate epimerase family. In terms of assembly, homodimer.

The protein resides in the cytoplasm. The catalysed reaction is (2S,6S)-2,6-diaminopimelate = meso-2,6-diaminopimelate. Its pathway is amino-acid biosynthesis; L-lysine biosynthesis via DAP pathway; DL-2,6-diaminopimelate from LL-2,6-diaminopimelate: step 1/1. Catalyzes the stereoinversion of LL-2,6-diaminopimelate (L,L-DAP) to meso-diaminopimelate (meso-DAP), a precursor of L-lysine and an essential component of the bacterial peptidoglycan. The polypeptide is Diaminopimelate epimerase (Laribacter hongkongensis (strain HLHK9)).